Reading from the N-terminus, the 473-residue chain is Photosystem II CP43 reaction center protein (473 aa).

Residues 1 to 14 (MKTLYSLRRFYPVE) constitute a propeptide that is removed on maturation. At Thr15 the chain carries N-acetylthreonine. Thr15 is modified (phosphothreonine). Helical transmembrane passes span 69 to 93 (LFEVAHFVPEKPMYEQGLILLPHLA), 134 to 155 (LLGPETLEESFPFFGYVWKDRN), 178 to 200 (KALYFGGVYDTWAPGGGDVRKIT), 255 to 275 (KPFAWARRALVWSGEAYLSYS), and 291 to 312 (WFNNTAYPSEFYGPTGPEASQA). Glu367 contacts [CaMn4O5] cluster. Residues 447-471 (RARAAAAGFEKGIDRDFEPVLSMTP) form a helical membrane-spanning segment.

The protein belongs to the PsbB/PsbC family. PsbC subfamily. PSII is composed of 1 copy each of membrane proteins PsbA, PsbB, PsbC, PsbD, PsbE, PsbF, PsbH, PsbI, PsbJ, PsbK, PsbL, PsbM, PsbT, PsbX, PsbY, PsbZ, Psb30/Ycf12, at least 3 peripheral proteins of the oxygen-evolving complex and a large number of cofactors. It forms dimeric complexes. Binds multiple chlorophylls and provides some of the ligands for the Ca-4Mn-5O cluster of the oxygen-evolving complex. It may also provide a ligand for a Cl- that is required for oxygen evolution. PSII binds additional chlorophylls, carotenoids and specific lipids. serves as cofactor.

The protein resides in the plastid. It is found in the chloroplast thylakoid membrane. In terms of biological role, one of the components of the core complex of photosystem II (PSII). It binds chlorophyll and helps catalyze the primary light-induced photochemical processes of PSII. PSII is a light-driven water:plastoquinone oxidoreductase, using light energy to abstract electrons from H(2)O, generating O(2) and a proton gradient subsequently used for ATP formation. This is Photosystem II CP43 reaction center protein from Daucus carota (Wild carrot).